The chain runs to 471 residues: Protein hedgehog (471 aa).

Cys-85 carries N-palmitoyl cysteine lipidation. Residues Glu-149, Glu-150, Asp-155, Thr-185, Glu-186, Asp-189, and Asp-191 each contribute to the Ca(2+) site. Gly-257 carries the Cholesterol glycine ester lipid modification.

It belongs to the hedgehog family. Interacts with shf. Interacts with ptc and CG5504/l(2)tid. The C-terminal part of the hedgehog protein precursor displays an autoproteolysis activity that results in the cleavage of the full-length protein into two parts (N-product and C-product). In addition, the C-terminal part displays a cholesterol transferase activity that results by the covalent attachment of a cholesterol moiety to the C-terminal of the newly generated N-product. The N-product is the active species in both local and long-range signaling, whereas the C-product has no signaling activity. Post-translationally, cholesterylation is required for N-product targeting to lipid rafts and multimerization. In terms of processing, N-palmitoylation by Rasp of the hedgehog N-product, within the secretory pathway, is required for the embryonic and larval patterning activities of the hedgehog signal. As to expression, in embryos, expression starts at stage 5 as a few stripes at the anterior and posterior ends, this expands to 17 stripes during stages 8-11. Expression is also seen in CNS and some PNS cells until stage 13-14, and in foregut, hindgut and salivary glands. In larvae, expression is seen in the posterior compartment of the wing, leg and antennal imaginal disks. In adults, high level of expression in specific regions of the proventriculus and hindgut, with slightly lower levels of expression in the posterior midgut. Relatively low levels of expression in the anterior midgut region.

Its subcellular location is the nucleus. The protein resides in the cytoplasm. It is found in the cell membrane. The catalysed reaction is glycyl-L-cysteinyl-[protein] + cholesterol + H(+) = [protein]-C-terminal glycyl cholesterol ester + N-terminal L-cysteinyl-[protein]. Functionally, the C-terminal part of the hedgehog protein precursor displays an autoproteolysis activity that results in the cleavage of the full-length protein into two parts (N-product and C-product). In addition, the C-terminal part displays a cholesterol transferase activity that results by the covalent attachment of a cholesterol moiety to the C-terminal of the newly generated N-product. Once cleaved, the C-product has no signaling activity and diffuses from the cell. In terms of biological role, the dually lipidated hedgehog protein N-product is a morphogen which is essential for a variety of patterning events during development. Establishes the anterior-posterior axis of the embryonic segments and patterns the larval imaginal disks. Binds to the patched (ptc) receptor, which functions in association with smoothened (smo), to activate the transcription of target genes wingless (wg), decapentaplegic (dpp) and ptc. In the absence of hh, ptc represses the constitutive signaling activity of smo through fused (fu). Essential component of a signaling pathway which regulates the Duox-dependent gut immune response to bacterial uracil; required to activate Cad99C-dependent endosome formation, norpA-dependent Ca2+ mobilization and p38 MAPK, which are essential steps in the Duox-dependent production of reactive oxygen species (ROS) in response to intestinal bacterial infection. During photoreceptor differentiation, it up-regulates transcription of Ubr3, which in turn promotes the hh-signaling pathway by mediating the ubiquitination and degradation of cos. This is Protein hedgehog from Drosophila melanogaster (Fruit fly).